A 608-amino-acid chain; its full sequence is Protein UL27 (608 aa).

The segment covering 1–13 (MNPVDQPPPPPLT) has biased composition (pro residues). The tract at residues 1-33 (MNPVDQPPPPPLTQQPEEQAKEDHDDGDERLFR) is disordered. The span at 18–33 (EQAKEDHDDGDERLFR) shows a compositional bias: basic and acidic residues.

The protein belongs to the herpesviridae U4 family. Interacts with host KAT5, PSME3 and EP400.

It localises to the host nucleus. Its subcellular location is the host nucleolus. In terms of biological role, promotes a cell cycle arrest in G0/G1 by inducing the proteasomal degradation of host histone acetyltransferase KAT5/Tip60. This Homo sapiens (Human) protein is Protein UL27 (UL27).